Reading from the N-terminus, the 941-residue chain is Bifunctional glutamine synthetase adenylyltransferase/adenylyl-removing enzyme (941 aa).

The segment at 1-431 (MSSAPPFAAA…TFRNAFRLAG (431 aa)) is adenylyl removase. The adenylyl transferase stretch occupies residues 447–941 (NGHAMRPHAG…DGTIAQAEVK (495 aa)).

The protein belongs to the GlnE family. It depends on Mg(2+) as a cofactor.

The enzyme catalyses [glutamine synthetase]-O(4)-(5'-adenylyl)-L-tyrosine + phosphate = [glutamine synthetase]-L-tyrosine + ADP. It carries out the reaction [glutamine synthetase]-L-tyrosine + ATP = [glutamine synthetase]-O(4)-(5'-adenylyl)-L-tyrosine + diphosphate. Functionally, involved in the regulation of glutamine synthetase GlnA, a key enzyme in the process to assimilate ammonia. When cellular nitrogen levels are high, the C-terminal adenylyl transferase (AT) inactivates GlnA by covalent transfer of an adenylyl group from ATP to specific tyrosine residue of GlnA, thus reducing its activity. Conversely, when nitrogen levels are low, the N-terminal adenylyl removase (AR) activates GlnA by removing the adenylyl group by phosphorolysis, increasing its activity. The regulatory region of GlnE binds the signal transduction protein PII (GlnB) which indicates the nitrogen status of the cell. The protein is Bifunctional glutamine synthetase adenylyltransferase/adenylyl-removing enzyme of Bordetella pertussis (strain Tohama I / ATCC BAA-589 / NCTC 13251).